A 187-amino-acid chain; its full sequence is MYEAGELRKGLKVEIDGDPYVIMEFEFVKPGKGQALYKCKLKNMLTGSQYDHTYRSGDKVGRANLEERKMEYLYFDGENYCFMDCTTYDQIFVPPSQVAEVLDLLKENTVCDVLFFDNRAIGVTLPNFVELAITEADPWVKGDTASGSNKPVTVETGCVLQVPPFIEVGEVIKIDTRTKNYVERVKK.

The protein belongs to the elongation factor P family.

It is found in the cytoplasm. Its pathway is protein biosynthesis; polypeptide chain elongation. In terms of biological role, involved in peptide bond synthesis. Stimulates efficient translation and peptide-bond synthesis on native or reconstituted 70S ribosomes in vitro. Probably functions indirectly by altering the affinity of the ribosome for aminoacyl-tRNA, thus increasing their reactivity as acceptors for peptidyl transferase. The polypeptide is Elongation factor P (Desulfosudis oleivorans (strain DSM 6200 / JCM 39069 / Hxd3) (Desulfococcus oleovorans)).